A 453-amino-acid chain; its full sequence is MTARIFAIFWLTLALVLMLVLMLPKLDSRQMTELLESEQRQGIMIEQHVEAELANDPPNDLMWWRRLFRAIDKWAPPGQRLLLVTSEGRVIGAERNEMQIIRNFIGQADNADHPQKKRYGRLEMVGPFSVRDGEDNYQLYLIRPASTSQSDFINLLFDRPLLLLIVTMLVSAPLLLWLAWSLAKPARKLKNAADEVAQGNLRQHPELEAGPQEFLAAGASFNQMVTALERMMTSQQRLLSDISHELRTPLTRLQLGTALLRRRSGESKELERIETEAHRLDSMINDLLVMSRNQAKNALVSETVKANQLWNEVLDNAAFEAEQMGKSFTVEYPPGPWPLYGNPNALESALENIVRNALRYSHTKISVSFSVDKDGITVNVDDDGPGVSPEDREQIFRPFYRTDEARDRESGGTGLGLAIVETAIQQHRGWVKADDSPLGGLRLTIWLPLYKRT.

Residues 1-4 (MTAR) are Cytoplasmic-facing. The chain crosses the membrane as a helical span at residues 5 to 25 (IFAIFWLTLALVLMLVLMLPK). At 26 to 159 (LDSRQMTELL…SDFINLLFDR (134 aa)) the chain is on the periplasmic side. Residues 160 to 180 (PLLLLIVTMLVSAPLLLWLAW) traverse the membrane as a helical segment. The HAMP domain maps to 180 to 233 (WSLAKPARKLKNAADEVAQGNLRQHPELEAGPQEFLAAGASFNQMVTALERMMT). The Cytoplasmic portion of the chain corresponds to 181–453 (SLAKPARKLK…TIWLPLYKRT (273 aa)). The Histidine kinase domain maps to 241 to 451 (DISHELRTPL…RLTIWLPLYK (211 aa)). The active-site Nucleophile is H244. A Phosphohistidine; by autocatalysis modification is found at H244. Residues 244–247 (HELR), 355–360 (RNALRY), D382, 401–402 (RT), and 412–417 (GTGLGL) contribute to the ATP site.

In terms of assembly, interacts with cognate response regulator CpxR.

It localises to the cell inner membrane. It carries out the reaction ATP + protein L-histidine = ADP + protein N-phospho-L-histidine.. With respect to regulation, the two-component system is activated by envelope stress such as overexpression of some (misfolded) periplasmic proteins. Its function is as follows. Histidine kinase member of the two-component regulatory system CpxA/CpxR which responds to envelope stress response by activating or, in some cases, repressing expression of downstream genes. Activates CpxR by phosphorylation. In Klebsiella pneumoniae subsp. pneumoniae (strain HS11286), this protein is Sensor histidine kinase CpxA.